Reading from the N-terminus, the 235-residue chain is Lipoprotein-releasing system ATP-binding protein LolD (235 aa).

Residues 5–235 (LECRDIRKVY…LMTESASVEG (231 aa)) enclose the ABC transporter domain. 41–48 (GSSGSGKS) lines the ATP pocket.

This sequence belongs to the ABC transporter superfamily. Lipoprotein translocase (TC 3.A.1.125) family. In terms of assembly, the complex is composed of two ATP-binding proteins (LolD) and two transmembrane proteins (LolC and LolE).

It localises to the cell inner membrane. In terms of biological role, part of the ABC transporter complex LolCDE involved in the translocation of mature outer membrane-directed lipoproteins, from the inner membrane to the periplasmic chaperone, LolA. Responsible for the formation of the LolA-lipoprotein complex in an ATP-dependent manner. In Vibrio parahaemolyticus serotype O3:K6 (strain RIMD 2210633), this protein is Lipoprotein-releasing system ATP-binding protein LolD.